We begin with the raw amino-acid sequence, 169 residues long: Ribosome maturation factor RimM (169 aa).

Residues 95-168 (EGNYYIFQIV…KMKVELLEGL (74 aa)) form the PRC barrel domain.

It belongs to the RimM family. As to quaternary structure, binds ribosomal protein uS19.

Its subcellular location is the cytoplasm. Its function is as follows. An accessory protein needed during the final step in the assembly of 30S ribosomal subunit, possibly for assembly of the head region. Essential for efficient processing of 16S rRNA. May be needed both before and after RbfA during the maturation of 16S rRNA. It has affinity for free ribosomal 30S subunits but not for 70S ribosomes. The polypeptide is Ribosome maturation factor RimM (Desulforamulus reducens (strain ATCC BAA-1160 / DSM 100696 / MI-1) (Desulfotomaculum reducens)).